Consider the following 283-residue polypeptide: Thymidylate synthase (283 aa).

Residue arginine 22 participates in dUMP binding. The Nucleophile role is filled by cysteine 160. DUMP-binding positions include 180-183, asparagine 191, and 221-223; these read RSCD and HIY. Aspartate 183 contributes to the (6R)-5,10-methylene-5,6,7,8-tetrahydrofolate binding site. Serine 282 contributes to the (6R)-5,10-methylene-5,6,7,8-tetrahydrofolate binding site.

It belongs to the thymidylate synthase family. Bacterial-type ThyA subfamily. Homodimer.

The protein resides in the cytoplasm. It carries out the reaction dUMP + (6R)-5,10-methylene-5,6,7,8-tetrahydrofolate = 7,8-dihydrofolate + dTMP. The protein operates within pyrimidine metabolism; dTTP biosynthesis. Catalyzes the reductive methylation of 2'-deoxyuridine-5'-monophosphate (dUMP) to 2'-deoxythymidine-5'-monophosphate (dTMP) while utilizing 5,10-methylenetetrahydrofolate (mTHF) as the methyl donor and reductant in the reaction, yielding dihydrofolate (DHF) as a by-product. This enzymatic reaction provides an intracellular de novo source of dTMP, an essential precursor for DNA biosynthesis. In Marinomonas sp. (strain MWYL1), this protein is Thymidylate synthase.